The chain runs to 61 residues: Small ribosomal subunit protein uS14 (61 aa).

Zn(2+) is bound by residues Cys-24, Cys-27, Cys-40, and Cys-43.

Belongs to the universal ribosomal protein uS14 family. Zinc-binding uS14 subfamily. In terms of assembly, part of the 30S ribosomal subunit. Contacts proteins S3 and S10. Requires Zn(2+) as cofactor.

In terms of biological role, binds 16S rRNA, required for the assembly of 30S particles and may also be responsible for determining the conformation of the 16S rRNA at the A site. This chain is Small ribosomal subunit protein uS14, found in Macrococcus caseolyticus (strain JCSC5402) (Macrococcoides caseolyticum).